Reading from the N-terminus, the 469-residue chain is Protein RUFY3 (469 aa).

Threonine 5 and threonine 12 each carry phosphothreonine. Residues serine 34 and serine 49 each carry the phosphoserine modification. Threonine 51 is subject to Phosphothreonine. The region spanning 95–227 (DSDYAPLQQF…IDANFCMKGE (133 aa)) is the RUN domain. Coiled coils occupy residues 271-362 (NRHL…VEKE) and 422-463 (KSEL…AANK).

In terms of assembly, interacts with PAK1. Interacts (via C-terminus) with Ras-related Rab-5 proteins. Interacts (via C-terminus) with Ras-related Rap-2 proteins. Interacts with PIK3CA and PIK3R1. Interacts (via N-terminus) with FSCN1; this interaction induces neuron axon development. Interacts with DBN1. Interacts (via the second coiled coil) with GTP-, but not GDP-bound ARL8A and ARL8B. Interacts with dynactin/DCTN1 and the dynein intermediate chain DYNC1I1/2. Directly interacts with DYNC1LI1. Phosphorylated by PAK1.

The protein localises to the cytoplasm. It localises to the endomembrane system. Its subcellular location is the cell projection. It is found in the invadopodium. The protein resides in the growth cone. The protein localises to the perikaryon. It localises to the filopodium. Its subcellular location is the lamellipodium. It is found in the lysosome. ARL8 effector that promotes the coupling of endolysosomes to dynein-dynactin for retrograde transport along microtubules. Acts by binding both GTP-bound ARL8 and dynein-dynactin. In nonneuronal cells, promotes concentration of endolysosomes in the juxtanuclear area. In hippocampal neurons, drives retrograde transport of endolysosomes from the axon to the soma. Plays a role in the generation of neuronal polarity formation and axon growth. Implicated in the formation of a single axon by developing neurons. May inhibit the formation of additional axons by inhibition of PI3K in minor neuronal processes. Plays a role in the formation of F-actin-enriched protrusive structures at the cell periphery. Plays a role in cytoskeletal organization by regulating the subcellular localization of FSCN1 and DBN1 at axonal growth cones. The chain is Protein RUFY3 from Pongo abelii (Sumatran orangutan).